Consider the following 179-residue polypeptide: Ubiquitin-conjugating enzyme E2 2 (179 aa).

Residues 1–28 (MSTPARRRLMRDFKRMQQDPPSGVSASP) are disordered. Residues 4-150 (PARRRLMRDF…VRETVENSWN (147 aa)) enclose the UBC core domain. Residue Cys-88 is the Glycyl thioester intermediate of the active site. The tract at residues 145-179 (VENSWNDDDDEEEEEEDEDEAEDEDDDDDDNIDED) is disordered. A compositionally biased stretch (acidic residues) spans 149-179 (WNDDDDEEEEEEDEDEAEDEDDDDDDNIDED). Residues 151 to 179 (DDDDEEEEEEDEDEAEDEDDDDDDNIDED) form an acidic tail region.

This sequence belongs to the ubiquitin-conjugating enzyme family.

It localises to the cytoplasm. It is found in the nucleus. It catalyses the reaction S-ubiquitinyl-[E1 ubiquitin-activating enzyme]-L-cysteine + [E2 ubiquitin-conjugating enzyme]-L-cysteine = [E1 ubiquitin-activating enzyme]-L-cysteine + S-ubiquitinyl-[E2 ubiquitin-conjugating enzyme]-L-cysteine.. The protein operates within protein modification; protein ubiquitination. Its function is as follows. Catalyzes the covalent attachment of ubiquitin to other proteins. Plays a role in transcription regulation by catalyzing the monoubiquitination of histone H2B to form H2BK123ub1. H2BK123ub1 gives a specific tag for epigenetic transcriptional activation and is also a prerequisite for H3K4me and H3K79me formation. Also involved in postreplication repair of UV-damaged DNA, in N-end rule-dependent protein degradation and in sporulation. The sequence is that of Ubiquitin-conjugating enzyme E2 2 (UBC2) from Candida albicans (strain SC5314 / ATCC MYA-2876) (Yeast).